Here is a 236-residue protein sequence, read N- to C-terminus: MVKKAIVTAMAVISLFTLMGCNNRAEVDTLSPAQAAELKPMPQSWRGVLPCADCEGIETSLFLEKDGTWVMNERYLGAREEPSSFASYGTWARTADKLVLTDSKGEKSYYRAKGDALEMLDREGNPIESQFNYTLEAAQSSLPMTPMTLRGMYFYMADAATFTDCATGKRFMVANNAELERSYLAARGHSEKPVLLSVEGHFTLEGNPDTGAPTKVLAPDTAGKFYPNQDCSSLGQ.

The N-terminal stretch at 1-20 (MVKKAIVTAMAVISLFTLMG) is a signal peptide. Cys21 carries N-palmitoyl cysteine lipidation. Cys21 carries S-diacylglycerol cysteine lipidation. Positions 21–100 (CNNRAEVDTL…WARTADKLVL (80 aa)) are N-terminal domain. At 21–236 (CNNRAEVDTL…PNQDCSSLGQ (216 aa)) the chain is on the periplasmic side. The CXXC signature appears at 51–54 (CADC). A C-terminal domain region spans residues 126 to 236 (PIESQFNYTL…PNQDCSSLGQ (111 aa)). Positions 144–156 (MTPMTLRGMYFYM) are could contain a copper-binding motif. Cys165 and Cys231 are disulfide-bonded.

Probably exists as a monomer in vivo, can however form homodimers which swap domains. In terms of processing, palmitoylated. Seems to only form a disulfide bond between Cys-165 and Cys-231. The 2 other cysteine residues may however be chemically active.

The protein localises to the cell outer membrane. Involved in copper homeostasis, could be involved in both copper efflux and the delivery of copper to copper-dependent enzymes. Required for efficient binding of stationary phase cells to hydrophobic surfaces, part of the process of biofilm formation. Functions during envelope stress responses; when overproduced induces degP through the activation of the two-component envelope stress response system CpxA/CpxR. DegP induction seems to require membrane anchoring of this protein. Structural changes and/or interaction of the CXXC motif with its environment may lead to activation of the Cpx stress response. This is Lipoprotein NlpE from Escherichia coli (strain K12).